Here is a 419-residue protein sequence, read N- to C-terminus: Potassium/proton antiporter CemA (419 aa).

The next 4 helical transmembrane spans lie at 196 to 216 (LASI…TLLF), 297 to 317 (IIEL…LCIA), 344 to 364 (ILLI…EVLI), and 371 to 391 (FGFV…PVVL).

This sequence belongs to the CemA family.

The protein resides in the plastid. It is found in the chloroplast inner membrane. It catalyses the reaction K(+)(in) + H(+)(out) = K(+)(out) + H(+)(in). Its function is as follows. Contributes to K(+)/H(+) antiport activity by supporting proton efflux to control proton extrusion and homeostasis in chloroplasts in a light-dependent manner to modulate photosynthesis. Prevents excessive induction of non-photochemical quenching (NPQ) under continuous-light conditions. Indirectly promotes efficient inorganic carbon uptake into chloroplasts. This Chara vulgaris (Common stonewort) protein is Potassium/proton antiporter CemA.